Consider the following 556-residue polypeptide: Oxygen-dependent choline dehydrogenase (556 aa).

4 to 33 (DYIIIGAGSAGNVLATRLTEDPNTTVLLLE) contributes to the FAD binding site. His473 acts as the Proton acceptor in catalysis.

Belongs to the GMC oxidoreductase family. FAD is required as a cofactor.

It catalyses the reaction choline + A = betaine aldehyde + AH2. It carries out the reaction betaine aldehyde + NAD(+) + H2O = glycine betaine + NADH + 2 H(+). The protein operates within amine and polyamine biosynthesis; betaine biosynthesis via choline pathway; betaine aldehyde from choline (cytochrome c reductase route): step 1/1. In terms of biological role, involved in the biosynthesis of the osmoprotectant glycine betaine. Catalyzes the oxidation of choline to betaine aldehyde and betaine aldehyde to glycine betaine at the same rate. The protein is Oxygen-dependent choline dehydrogenase of Escherichia coli O6:K15:H31 (strain 536 / UPEC).